A 223-amino-acid polypeptide reads, in one-letter code: Putative 3-methyladenine DNA glycosylase (223 aa).

It belongs to the DNA glycosylase MPG family.

This is Putative 3-methyladenine DNA glycosylase from Pseudomonas syringae pv. syringae (strain B728a).